Consider the following 326-residue polypeptide: Acyl-CoA-binding domain-containing protein 4 (326 aa).

Residues 10–99 enclose the ACB domain; it reads CQKQFQAAVS…MKLVAQKVID (90 aa). Residues 21 to 30, 41 to 45, Lys67, and Tyr86 contribute to the an acyl-CoA site; these read IQNLPKNGSY and YSYYK. Disordered stretches follow at residues 147-170 and 223-248; these read VQAA…SRLP and KEAA…SLMG. Ser164 bears the Phosphoserine mark.

Its function is as follows. Binds medium- and long-chain acyl-CoA esters and may function as an intracellular carrier of acyl-CoA esters. This is Acyl-CoA-binding domain-containing protein 4 (Acbd4) from Rattus norvegicus (Rat).